Consider the following 414-residue polypeptide: Succinylornithine transaminase (414 aa).

N6-(pyridoxal phosphate)lysine is present on Lys260.

This sequence belongs to the class-III pyridoxal-phosphate-dependent aminotransferase family. AstC subfamily. Requires pyridoxal 5'-phosphate as cofactor.

It carries out the reaction N(2)-succinyl-L-ornithine + 2-oxoglutarate = N-succinyl-L-glutamate 5-semialdehyde + L-glutamate. It participates in amino-acid degradation; L-arginine degradation via AST pathway; L-glutamate and succinate from L-arginine: step 3/5. Its function is as follows. Catalyzes the transamination of N(2)-succinylornithine and alpha-ketoglutarate into N(2)-succinylglutamate semialdehyde and glutamate. Can also act as an acetylornithine aminotransferase. The sequence is that of Succinylornithine transaminase from Yersinia pseudotuberculosis serotype I (strain IP32953).